The following is a 285-amino-acid chain: S-methyl-5'-thioadenosine phosphorylase (285 aa).

Phosphate is bound by residues serine 10, 52–53 (RH), and 85–86 (TA). Residue methionine 188 coordinates substrate. Threonine 189 is a phosphate binding site. A substrate-binding site is contributed by 212–214 (DYD).

The protein belongs to the PNP/MTAP phosphorylase family. MTAP subfamily. As to quaternary structure, homotrimer.

Its subcellular location is the cytoplasm. It is found in the nucleus. The catalysed reaction is S-methyl-5'-thioadenosine + phosphate = 5-(methylsulfanyl)-alpha-D-ribose 1-phosphate + adenine. It participates in amino-acid biosynthesis; L-methionine biosynthesis via salvage pathway; S-methyl-5-thio-alpha-D-ribose 1-phosphate from S-methyl-5'-thioadenosine (phosphorylase route): step 1/1. Functionally, catalyzes the reversible phosphorylation of S-methyl-5'-thioadenosine (MTA) to adenine and 5-methylthioribose-1-phosphate. Involved in the breakdown of MTA, a major by-product of polyamine biosynthesis. Responsible for the first step in the methionine salvage pathway after MTA has been generated from S-adenosylmethionine. Has broad substrate specificity with 6-aminopurine nucleosides as preferred substrates. This chain is S-methyl-5'-thioadenosine phosphorylase, found in Caenorhabditis briggsae.